The sequence spans 344 residues: Methionine import ATP-binding protein MetN (344 aa).

Residues 2-241 (IELQGLSQRF…PQHEVTRAMI (240 aa)) enclose the ABC transporter domain. 38–45 (GRSGAGKS) is an ATP binding site.

This sequence belongs to the ABC transporter superfamily. Methionine importer (TC 3.A.1.24) family. In terms of assembly, the complex is composed of two ATP-binding proteins (MetN), two transmembrane proteins (MetI) and a solute-binding protein (MetQ).

The protein resides in the cell inner membrane. The enzyme catalyses L-methionine(out) + ATP + H2O = L-methionine(in) + ADP + phosphate + H(+). The catalysed reaction is D-methionine(out) + ATP + H2O = D-methionine(in) + ADP + phosphate + H(+). Functionally, part of the ABC transporter complex MetNIQ involved in methionine import. Responsible for energy coupling to the transport system. The chain is Methionine import ATP-binding protein MetN from Cupriavidus pinatubonensis (strain JMP 134 / LMG 1197) (Cupriavidus necator (strain JMP 134)).